A 457-amino-acid chain; its full sequence is Glycoprotein endo-alpha-1,2-mannosidase-like protein (457 aa).

The Cytoplasmic segment spans residues 1–8; it reads MARRRRRA. The chain crosses the membrane as a helical; Signal-anchor for type II membrane protein span at residues 9 to 29; the sequence is CIALFLVLLFAFGTLMGLRTL. The Lumenal segment spans residues 30–457; the sequence is KAPDGLPALG…FIKEKEQWLM (428 aa). The tract at residues 46–93 is disordered; the sequence is PFERRPEGAPAPAARAPAAPAAPPPPPPPPRTADPGGSPGPAPAEAEP. The span at 53–64 shows a compositional bias: low complexity; that stretch reads GAPAPAARAPAA. The segment covering 65–87 has biased composition (pro residues); the sequence is PAAPPPPPPPPRTADPGGSPGPA.

It belongs to the glycosyl hydrolase 99 family.

The protein resides in the golgi apparatus membrane. The sequence is that of Glycoprotein endo-alpha-1,2-mannosidase-like protein (MANEAL) from Homo sapiens (Human).